The primary structure comprises 176 residues: Cytochrome b (176 aa).

3 helical membrane-spanning segments follow: residues 33 to 53 (FGSLLGICLALQILTGIFLAM), 77 to 98 (WVLRYLHANGASMFFICLYLHV), and 113 to 133 (WNMGVILLFAVMATAFMGYVL). Heme b contacts are provided by H83 and H97.

It belongs to the cytochrome b family. As to quaternary structure, the cytochrome bc1 complex contains 11 subunits: 3 respiratory subunits (MT-CYB, CYC1 and UQCRFS1), 2 core proteins (UQCRC1 and UQCRC2) and 6 low-molecular weight proteins (UQCRH/QCR6, UQCRB/QCR7, UQCRQ/QCR8, UQCR10/QCR9, UQCR11/QCR10 and a cleavage product of UQCRFS1). This cytochrome bc1 complex then forms a dimer. It depends on heme b as a cofactor.

The protein localises to the mitochondrion inner membrane. In terms of biological role, component of the ubiquinol-cytochrome c reductase complex (complex III or cytochrome b-c1 complex) that is part of the mitochondrial respiratory chain. The b-c1 complex mediates electron transfer from ubiquinol to cytochrome c. Contributes to the generation of a proton gradient across the mitochondrial membrane that is then used for ATP synthesis. The protein is Cytochrome b (MT-CYB) of Lasionycteris noctivagans (Silver-haired bat).